The chain runs to 344 residues: Methylthioribose-1-phosphate isomerase (344 aa).

Substrate is bound by residues 55–57 (RGA), R98, and Q202. The active-site Proton donor is D243. Residue 253–254 (NK) participates in substrate binding.

The protein belongs to the eIF-2B alpha/beta/delta subunits family. MtnA subfamily.

It catalyses the reaction 5-(methylsulfanyl)-alpha-D-ribose 1-phosphate = 5-(methylsulfanyl)-D-ribulose 1-phosphate. The protein operates within amino-acid biosynthesis; L-methionine biosynthesis via salvage pathway; L-methionine from S-methyl-5-thio-alpha-D-ribose 1-phosphate: step 1/6. In terms of biological role, catalyzes the interconversion of methylthioribose-1-phosphate (MTR-1-P) into methylthioribulose-1-phosphate (MTRu-1-P). The sequence is that of Methylthioribose-1-phosphate isomerase from Gemmatimonas aurantiaca (strain DSM 14586 / JCM 11422 / NBRC 100505 / T-27).